Consider the following 3354-residue polypeptide: Cadherin-23 (3354 aa).

Positions 1 to 23 are cleaved as a signal peptide; the sequence is MGRHVATSCHVAWLLVLISGCWG. Over 24-3064 the chain is Extracellular; the sequence is QVNRLPFFTN…SVRLPDDMSA (3041 aa). 27 consecutive Cadherin domains span residues 34-132, 133-236, 237-348, 349-460, 461-561, 562-671, 672-784, 779-890, 891-995, 996-1102, 1103-1208, 1210-1313, 1314-1418, 1420-1527, 1529-1634, 1635-1744, 1745-1851, 1852-1959, 1960-2069, 2070-2174, 2175-2293, 2297-2402, 2403-2509, 2510-2611, 2614-2722, 2729-2846, and 2847-2975; these read HFFD…APTF, HNQP…DPIF, INLP…APEF, NSSE…RPIF, SQPL…VPTF, QKDA…PPTF, SKPA…APYY, KDAP…DPTF, QNLP…TPTF, FPAV…RPIF, LQSS…APVF, QQQY…AVQF, SNAS…SPRF, FTSD…PPVI, SPFG…APMF, QQPH…VPTF, PRDY…DPVL, LNLP…HPLF, TKST…RPTF, SPAT…RPEF, LNPI…TPQF, GITY…NPIF, DQPS…RPQF, SKPQ…RPVF, PPNG…EPLF, SPQY…PPRF, and TKAE…EEEF. N-linked (GlcNAc...) asparagine glycosylation is found at Asn-155 and Asn-206. 32 N-linked (GlcNAc...) asparagine glycosylation sites follow: Asn-349, Asn-393, Asn-434, Asn-466, Asn-472, Asn-652, Asn-694, Asn-765, Asn-810, Asn-827, Asn-941, Asn-1001, Asn-1018, Asn-1171, Asn-1282, Asn-1315, Asn-1473, Asn-1534, Asn-1651, Asn-1667, Asn-1818, Asn-1857, Asn-1889, Asn-1902, Asn-2013, Asn-2050, Asn-2129, Asn-2168, Asn-2195, Asn-2263, Asn-2357, and Asn-2369. N-linked (GlcNAc...) asparagine glycans are attached at residues Asn-2616, Asn-2749, Asn-2808, Asn-2877, Asn-2896, Asn-2941, and Asn-2981. Residues 3065–3085 form a helical membrane-spanning segment; sequence LQMAIIVLAILLFLAAMLFVL. The Cytoplasmic portion of the chain corresponds to 3086-3354; that stretch reads MNWYYRTVHK…METPLEITEL (269 aa).

In terms of assembly, antiparallel heterodimer with PCDH15. Interacts with USH1C and USH1G. Particularly strong expression in the retina. Found also in the cochlea.

The protein localises to the cell membrane. Functionally, cadherins are calcium-dependent cell adhesion proteins. They preferentially interact with themselves in a homophilic manner in connecting cells. CDH23 is required for establishing and/or maintaining the proper organization of the stereocilia bundle of hair cells in the cochlea and the vestibule during late embryonic/early postnatal development. It is part of the functional network formed by USH1C, USH1G, CDH23 and MYO7A that mediates mechanotransduction in cochlear hair cells. Required for normal hearing. The polypeptide is Cadherin-23 (Homo sapiens (Human)).